We begin with the raw amino-acid sequence, 166 residues long: Ribosome maturation factor RimM (166 aa).

The 74-residue stretch at 90-163 (EGQYFIKDII…KIVIKAVEEW (74 aa)) folds into the PRC barrel domain.

The protein belongs to the RimM family. In terms of assembly, binds ribosomal protein uS19.

The protein localises to the cytoplasm. Functionally, an accessory protein needed during the final step in the assembly of 30S ribosomal subunit, possibly for assembly of the head region. Essential for efficient processing of 16S rRNA. May be needed both before and after RbfA during the maturation of 16S rRNA. It has affinity for free ribosomal 30S subunits but not for 70S ribosomes. The sequence is that of Ribosome maturation factor RimM from Clostridium acetobutylicum (strain ATCC 824 / DSM 792 / JCM 1419 / IAM 19013 / LMG 5710 / NBRC 13948 / NRRL B-527 / VKM B-1787 / 2291 / W).